Consider the following 124-residue polypeptide: Small ribosomal subunit protein uS12 (124 aa).

The tract at residues 1–29 is disordered; the sequence is MATINQLVRKGRKRRVAKSNVPALEASPQ. Position 89 is a 3-methylthioaspartic acid (Asp-89). A disordered region spans residues 101–124; it reads AADTAGVDKRRQGRSKYGAKRPKS. A compositionally biased stretch (basic residues) spans 111-124; the sequence is RQGRSKYGAKRPKS.

It belongs to the universal ribosomal protein uS12 family. Part of the 30S ribosomal subunit. Contacts proteins S8 and S17. May interact with IF1 in the 30S initiation complex.

In terms of biological role, with S4 and S5 plays an important role in translational accuracy. Functionally, interacts with and stabilizes bases of the 16S rRNA that are involved in tRNA selection in the A site and with the mRNA backbone. Located at the interface of the 30S and 50S subunits, it traverses the body of the 30S subunit contacting proteins on the other side and probably holding the rRNA structure together. The combined cluster of proteins S8, S12 and S17 appears to hold together the shoulder and platform of the 30S subunit. In Alkalilimnicola ehrlichii (strain ATCC BAA-1101 / DSM 17681 / MLHE-1), this protein is Small ribosomal subunit protein uS12.